Reading from the N-terminus, the 361-residue chain is Histidinol-phosphate aminotransferase (361 aa).

An N6-(pyridoxal phosphate)lysine modification is found at lysine 224.

It belongs to the class-II pyridoxal-phosphate-dependent aminotransferase family. Histidinol-phosphate aminotransferase subfamily. As to quaternary structure, homodimer. It depends on pyridoxal 5'-phosphate as a cofactor.

It catalyses the reaction L-histidinol phosphate + 2-oxoglutarate = 3-(imidazol-4-yl)-2-oxopropyl phosphate + L-glutamate. Its pathway is amino-acid biosynthesis; L-histidine biosynthesis; L-histidine from 5-phospho-alpha-D-ribose 1-diphosphate: step 7/9. The chain is Histidinol-phosphate aminotransferase from Bacillus licheniformis (strain ATCC 14580 / DSM 13 / JCM 2505 / CCUG 7422 / NBRC 12200 / NCIMB 9375 / NCTC 10341 / NRRL NRS-1264 / Gibson 46).